The chain runs to 59 residues: MSAEVKVTLVRSHIGKSTSVKAVLNGLGLTKRQKTVTLKDSPEVRGMINKVSHLLKVDE.

It belongs to the universal ribosomal protein uL30 family. As to quaternary structure, part of the 50S ribosomal subunit.

The sequence is that of Large ribosomal subunit protein uL30 from Geotalea daltonii (strain DSM 22248 / JCM 15807 / FRC-32) (Geobacter daltonii).